Consider the following 208-residue polypeptide: Uracil phosphoribosyltransferase (208 aa).

Residues Arg78, Arg103, and 130–138 each bind 5-phospho-alpha-D-ribose 1-diphosphate; that span reads DPMLATGGS. Residues Ile193 and 198 to 200 contribute to the uracil site; that span reads GDA. Asp199 contributes to the 5-phospho-alpha-D-ribose 1-diphosphate binding site.

Belongs to the UPRTase family. Requires Mg(2+) as cofactor.

It catalyses the reaction UMP + diphosphate = 5-phospho-alpha-D-ribose 1-diphosphate + uracil. It functions in the pathway pyrimidine metabolism; UMP biosynthesis via salvage pathway; UMP from uracil: step 1/1. Its activity is regulated as follows. Allosterically activated by GTP. In terms of biological role, catalyzes the conversion of uracil and 5-phospho-alpha-D-ribose 1-diphosphate (PRPP) to UMP and diphosphate. This is Uracil phosphoribosyltransferase from Proteus mirabilis (strain HI4320).